The following is a 230-amino-acid chain: Small ribosomal subunit protein uS3 (230 aa).

The 69-residue stretch at 39–107 (VRKYLADKLQ…PAQINIAEIR (69 aa)) folds into the KH type-2 domain.

Belongs to the universal ribosomal protein uS3 family. Part of the 30S ribosomal subunit. Forms a tight complex with proteins S10 and S14.

Its function is as follows. Binds the lower part of the 30S subunit head. Binds mRNA in the 70S ribosome, positioning it for translation. This chain is Small ribosomal subunit protein uS3, found in Shewanella oneidensis (strain ATCC 700550 / JCM 31522 / CIP 106686 / LMG 19005 / NCIMB 14063 / MR-1).